Reading from the N-terminus, the 490-residue chain is Ribosome biogenesis protein YTM1 (490 aa).

The tract at residues 1–22 is disordered; the sequence is MDGLEDGPLDASTATSQKPQRQ. The tract at residues 23-104 is ubiquitin-like (UBL) domain; it reads VRLKLTSRHE…ETTLDVEYVR (82 aa). WD repeat units lie at residues 116–168, 175–213, 224–263, 298–338, 340–379, 385–425, and 449–487; these read LHDD…IALS, GHTA…DGFS, GHKG…NPAA, SHTA…LVDT, TASH…TTVS, GHTN…TDKD, and GEGV…PNGG. A disordered region spans residues 255 to 286; sequence TRKSENPAAPESLLPSNTSRSSKRRKLNSSVS.

The protein belongs to the WD repeat WDR12/YTM1 family. In terms of assembly, component of the NOP7 complex, composed of ERB1, NOP7 and YTM1. The complex is held together by ERB1, which interacts with NOP7 via its N-terminal domain and with YTM1 via a high-affinity interaction between the seven-bladed beta-propeller domains of the 2 proteins. The NOP7 complex associates with the 66S pre-ribosome. Interacts (via UBL domain) with MDN1 (via VWFA/MIDAS domain).

It is found in the nucleus. Its subcellular location is the nucleolus. The protein resides in the nucleoplasm. Functionally, component of the NOP7 complex, which is required for maturation of the 25S and 5.8S ribosomal RNAs and formation of the 60S ribosome. This chain is Ribosome biogenesis protein YTM1, found in Ajellomyces capsulatus (strain NAm1 / WU24) (Darling's disease fungus).